A 321-amino-acid chain; its full sequence is Olfactory receptor 52N2 (321 aa).

The Extracellular segment spans residues 1–27; it reads MSGDNSSSLTPGFFILNGVPGLEATHI. Residue Asn5 is glycosylated (N-linked (GlcNAc...) asparagine). The chain crosses the membrane as a helical span at residues 28 to 48; the sequence is WISLPFCFMYIIAVVGNCGLI. Topologically, residues 49–56 are cytoplasmic; the sequence is CLISHEEA. A helical transmembrane segment spans residues 57–77; the sequence is LHRPMYYFLALLSFTDVTLCT. Over 78 to 101 the chain is Extracellular; it reads TMVPNMLCIFWFNLKEIDFNACLA. A disulfide bridge links Cys99 with Cys191. The chain crosses the membrane as a helical span at residues 102–122; sequence QMFFVHMLTGMESGVLMLMAL. Residues 123 to 141 lie on the Cytoplasmic side of the membrane; it reads DRYVAICYPLRYATILTNP. Residues 142 to 162 traverse the membrane as a helical segment; it reads VIAKAGLATFLRNVMLIIPFT. Over 163–198 the chain is Extracellular; that stretch reads LLTKRLPYCRGNFIPHTYCDHMSVAKVSCGNFKVNA. A helical transmembrane segment spans residues 199–219; that stretch reads IYGLMVALLIGVFDICCISVS. The Cytoplasmic segment spans residues 220–239; sequence YTMILQAVMSLSSADARHKA. The helical transmembrane segment at 240–260 threads the bilayer; sequence FSTCTSHMCSIVITYVAAFFT. The Extracellular portion of the chain corresponds to 261 to 276; it reads FFTHRFVGHNIPNHIH. The helical transmembrane segment at 277–297 threads the bilayer; it reads IIVANLYLLLPPTMNPIVYGV. Residues 298 to 321 lie on the Cytoplasmic side of the membrane; that stretch reads KTKQIQEGVIKFLLGDKVSFTYDK.

The protein belongs to the G-protein coupled receptor 1 family.

Its subcellular location is the cell membrane. Its function is as follows. Odorant receptor. The chain is Olfactory receptor 52N2 (OR52N2) from Homo sapiens (Human).